We begin with the raw amino-acid sequence, 546 residues long: Chaperonin GroEL (546 aa).

ATP contacts are provided by residues 30–33 (TLGP), K51, 87–91 (DGTTT), G415, 479–481 (NAA), and D495. The segment at 526–546 (KKDEPAMPAGGGMGGMGGMDF) is disordered. Positions 534-546 (AGGGMGGMGGMDF) are enriched in gly residues.

Belongs to the chaperonin (HSP60) family. As to quaternary structure, forms a cylinder of 14 subunits composed of two heptameric rings stacked back-to-back. Interacts with the co-chaperonin GroES.

Its subcellular location is the cytoplasm. It carries out the reaction ATP + H2O + a folded polypeptide = ADP + phosphate + an unfolded polypeptide.. Functionally, together with its co-chaperonin GroES, plays an essential role in assisting protein folding. The GroEL-GroES system forms a nano-cage that allows encapsulation of the non-native substrate proteins and provides a physical environment optimized to promote and accelerate protein folding. The protein is Chaperonin GroEL of Xanthomonas oryzae pv. oryzae (strain MAFF 311018).